Reading from the N-terminus, the 195-residue chain is Adenylate kinase (195 aa).

Residue 8 to 16 (GIPGVGKTT) coordinates ATP.

Belongs to the archaeal adenylate kinase family. As to quaternary structure, homotrimer.

The protein resides in the cytoplasm. It carries out the reaction AMP + ATP = 2 ADP. The chain is Adenylate kinase (adkA) from Saccharolobus solfataricus (strain ATCC 35092 / DSM 1617 / JCM 11322 / P2) (Sulfolobus solfataricus).